A 478-amino-acid polypeptide reads, in one-letter code: Leukotoxin secretion protein D (478 aa).

Over 1 to 77 the chain is Cytoplasmic; sequence MKIWLSGIYE…LAVAIVLASV (77 aa). The helical transmembrane segment at 78–98 threads the bilayer; the sequence is SKVEIVATAPGKLTFSGRSKE. Residues 99–478 lie on the Periplasmic side of the membrane; that stretch reads IKPIENTIVQ…ESVTESLRER (380 aa).

This sequence belongs to the membrane fusion protein (MFP) (TC 8.A.1) family.

The protein resides in the cell inner membrane. In terms of biological role, involved in the transport of the Leukotoxin. This chain is Leukotoxin secretion protein D (lktD), found in Pasteurella haemolytica-like sp. (strain 5943B).